Consider the following 286-residue polypeptide: MANAKEIKTKIASVQNTQKITSAMEMVAASKMRKAQDRMASSRPYAENMRKVIGHVAQGSLEYKHPYLEVREAKRVGYIVVSTDRGLCGGLNVNLFKKVVADVKKQREAGAEVEFCPIGARSVQFFNSFGGQVSAHASGLGDAPSLTDLIGTVRVMLEAYNEGKLDRLYVVFNKFVNTMTQTPVIEQLLPLPKSEEDEISHHWDYLYEPDPKELLDTLLVRYVESQVYQGVVENIASEQAARMVAMKAATDNAGELISDLELVYNKARQAAITQELSEIVSGAAAV.

The protein belongs to the ATPase gamma chain family. F-type ATPases have 2 components, CF(1) - the catalytic core - and CF(0) - the membrane proton channel. CF(1) has five subunits: alpha(3), beta(3), gamma(1), delta(1), epsilon(1). CF(0) has three main subunits: a, b and c.

The protein localises to the cell inner membrane. In terms of biological role, produces ATP from ADP in the presence of a proton gradient across the membrane. The gamma chain is believed to be important in regulating ATPase activity and the flow of protons through the CF(0) complex. This chain is ATP synthase gamma chain, found in Shewanella piezotolerans (strain WP3 / JCM 13877).